The chain runs to 151 residues: Ribosome maturation factor RimP (151 aa).

It belongs to the RimP family.

The protein localises to the cytoplasm. Functionally, required for maturation of 30S ribosomal subunits. This is Ribosome maturation factor RimP from Shewanella frigidimarina (strain NCIMB 400).